The following is a 333-amino-acid chain: Electron transfer flavoprotein subunit alpha, mitochondrial (333 aa).

Residues 1-19 (MFRAAAPGQLRRAASSLRF) constitute a mitochondrion transit peptide. The tract at residues 20 to 204 (QSTLVIAEHA…EISEWLDQKL (185 aa)) is domain I. The residue at position 59 (K59) is an N6-acetyllysine; alternate. The residue at position 59 (K59) is an N6-succinyllysine; alternate. At K62 the chain carries N6-acetyllysine. The residue at position 69 (K69) is an N6-acetyllysine; alternate. K69 is subject to N6-succinyllysine; alternate. K75 is modified (N6-acetyllysine). Position 93 is a phosphothreonine (T93). Residues K101 and K139 each carry the N6-acetyllysine modification. Position 140 is a phosphoserine (S140). At K158 the chain carries N6-acetyllysine; alternate. K158 is subject to N6-succinyllysine; alternate. Residue K164 is modified to N6-acetyllysine. The residue at position 187 (K187) is an N6-succinyllysine. K203 bears the N6-acetyllysine; alternate mark. N6-succinyllysine; alternate is present on K203. Residues 205 to 333 (TKSDRPELTG…PEMTEILKKK (129 aa)) are domain II. Residue K216 is modified to N6-succinyllysine. An FAD-binding site is contributed by R223. 2 positions are modified to N6-acetyllysine; alternate: K226 and K232. N6-succinyllysine; alternate is present on residues K226 and K232. FAD is bound by residues S248, 263 to 266 (VGQT), 281 to 286 (SGAIQH), and N300. At K301 the chain carries N6-succinyllysine. 318 to 319 (DL) lines the FAD pocket.

It belongs to the ETF alpha-subunit/FixB family. In terms of assembly, heterodimer composed of ETFA and ETFB. Identified in a complex that contains ETFA, ETFB and ETFRF1. Interaction with ETFRF1 promotes dissociation of the bound FAD and loss of electron transfer activity. Interacts with TASOR. FAD serves as cofactor.

The protein resides in the mitochondrion matrix. In terms of biological role, heterodimeric electron transfer flavoprotein that accepts electrons from several mitochondrial dehydrogenases, including acyl-CoA dehydrogenases, glutaryl-CoA and sarcosine dehydrogenase. It transfers the electrons to the main mitochondrial respiratory chain via ETF-ubiquinone oxidoreductase (ETF dehydrogenase). Required for normal mitochondrial fatty acid oxidation and normal amino acid metabolism. This Macaca fascicularis (Crab-eating macaque) protein is Electron transfer flavoprotein subunit alpha, mitochondrial (ETFA).